The following is a 168-amino-acid chain: Vasopressin-neurophysin 2-copeptin (168 aa).

The signal sequence occupies residues 1 to 23 (MLARMLNTTLSACFLSLLAFSSA). Cys-24 and Cys-29 are oxidised to a cystine. Gly-32 is modified (glycine amide). Disulfide bonds link Cys-45/Cys-89, Cys-48/Cys-62, Cys-56/Cys-79, Cys-63/Cys-69, Cys-96/Cys-108, Cys-102/Cys-120, and Cys-109/Cys-114. The N-linked (GlcNAc...) asparagine glycan is linked to Asn-135.

It belongs to the vasopressin/oxytocin family. Interacts with vasopressin receptors V1bR/AVPR1B (Ki=85 pM), V1aR/AVPR1A (Ki=0.6 nM) and V2R/AVPR2 (Ki=4.9 nM). Interacts with oxytocin receptor (OXTR) (Ki=110 nM).

Its subcellular location is the secreted. Functionally, neurophysin 2 specifically binds vasopressin. In terms of biological role, vasopressin has a direct antidiuretic action on the kidney, it also causes vasoconstriction of the peripheral vessels. Acts by binding to vasopressin receptors (V1bR/AVPR1B, V1aR/AVPR1A, and V2R/AVPR2). This is Vasopressin-neurophysin 2-copeptin (Avp) from Mus musculus (Mouse).